The primary structure comprises 122 residues: Large ribosomal subunit protein uL14 (122 aa).

Belongs to the universal ribosomal protein uL14 family. Part of the 50S ribosomal subunit. Forms a cluster with proteins L3 and L19. In the 70S ribosome, L14 and L19 interact and together make contacts with the 16S rRNA in bridges B5 and B8.

Binds to 23S rRNA. Forms part of two intersubunit bridges in the 70S ribosome. The chain is Large ribosomal subunit protein uL14 from Pseudothermotoga lettingae (strain ATCC BAA-301 / DSM 14385 / NBRC 107922 / TMO) (Thermotoga lettingae).